The primary structure comprises 413 residues: Gamma-glutamyl phosphate reductase (413 aa).

Belongs to the gamma-glutamyl phosphate reductase family.

It is found in the cytoplasm. It carries out the reaction L-glutamate 5-semialdehyde + phosphate + NADP(+) = L-glutamyl 5-phosphate + NADPH + H(+). Its pathway is amino-acid biosynthesis; L-proline biosynthesis; L-glutamate 5-semialdehyde from L-glutamate: step 2/2. Catalyzes the NADPH-dependent reduction of L-glutamate 5-phosphate into L-glutamate 5-semialdehyde and phosphate. The product spontaneously undergoes cyclization to form 1-pyrroline-5-carboxylate. In Lactococcus lactis subsp. lactis (strain IL1403) (Streptococcus lactis), this protein is Gamma-glutamyl phosphate reductase.